The chain runs to 506 residues: Alpha-ketoglutarate-dependent dioxygenase FTO (506 aa).

Residue Thr-4 is modified to Phosphothreonine. The tract at residues 32 to 326 (TPKDDEFYQQ…SSTHRVAECS (295 aa)) is fe2OG dioxygenase domain. Residues Arg-96 and Tyr-108 each coordinate substrate. Residue Asn-204 coordinates 2-oxoglutarate. The segment at 212–223 (PYLKEEPYFGMG) is loop L1; predicted to block binding of double-stranded DNA or RNA. Position 215 is an N6-acetyllysine (Lys-215). Fe cation contacts are provided by His-230 and Asp-232. 230-233 (HHDE) provides a ligand contact to substrate. Residue Tyr-294 coordinates 2-oxoglutarate. His-306 is a Fe cation binding site. Residues 315–317 (RFS), Thr-319, and Arg-321 each bind 2-oxoglutarate.

Belongs to the fto family. In terms of assembly, monomer. May also exist as homodimer. Fe(2+) is required as a cofactor.

It is found in the nucleus. The protein localises to the nucleus speckle. Its subcellular location is the cytoplasm. It catalyses the reaction a 5'-end (N(7)-methyl 5'-triphosphoguanosine)-(N(6),2'-O-dimethyladenosine) in mRNA + 2-oxoglutarate + O2 = a 5'-end (N(7)-methyl 5'-triphosphoguanosine)-(2'-O-methyladenosine) in mRNA + formaldehyde + succinate + CO2. It carries out the reaction an N(6)-methyladenosine in mRNA + 2-oxoglutarate + O2 = an adenosine in mRNA + formaldehyde + succinate + CO2. The catalysed reaction is N(6)-methyladenosine in U6 snRNA + 2-oxoglutarate + O2 = adenosine in U6 snRNA + formaldehyde + succinate + CO2. The enzyme catalyses a 5'-end (N(7)-methyl 5'-triphosphoguanosine)-(N(6),2'-O-dimethyladenosine) in U6 snRNA + 2-oxoglutarate + O2 = a 5'-end (N(7)-methyl 5'-triphosphoguanosine)-(2'-O-methyladenosine) in U6 snRNA + formaldehyde + succinate + CO2. It catalyses the reaction an N(1)-methyladenosine in tRNA + 2-oxoglutarate + O2 = an adenosine in tRNA + formaldehyde + succinate + CO2. Its function is as follows. RNA demethylase that mediates oxidative demethylation of different RNA species, such as mRNAs, tRNAs and snRNAs, and acts as a regulator of fat mass, adipogenesis and energy homeostasis. Specifically demethylates N(6)-methyladenosine (m6A) RNA, the most prevalent internal modification of messenger RNA (mRNA) in higher eukaryotes. M6A demethylation by FTO affects mRNA expression and stability. Also able to demethylate m6A in U6 small nuclear RNA (snRNA). Mediates demethylation of N(6),2'-O-dimethyladenosine cap (m6A(m)), by demethylating the N(6)-methyladenosine at the second transcribed position of mRNAs and U6 snRNA. Demethylation of m6A(m) in the 5'-cap by FTO affects mRNA stability by promoting susceptibility to decapping. Also acts as a tRNA demethylase by removing N(1)-methyladenine from various tRNAs. Has no activity towards 1-methylguanine. Has no detectable activity towards double-stranded DNA. Also able to repair alkylated DNA and RNA by oxidative demethylation: demethylates single-stranded RNA containing 3-methyluracil, single-stranded DNA containing 3-methylthymine and has low demethylase activity towards single-stranded DNA containing 1-methyladenine or 3-methylcytosine. Ability to repair alkylated DNA and RNA is however unsure in vivo. Involved in the regulation of fat mass, adipogenesis and body weight, thereby contributing to the regulation of body size and body fat accumulation. Involved in the regulation of thermogenesis and the control of adipocyte differentiation into brown or white fat cells. Regulates activity of the dopaminergic midbrain circuitry via its ability to demethylate m6A in mRNAs. Plays an oncogenic role in a number of acute myeloid leukemias by enhancing leukemic oncogene-mediated cell transformation: acts by mediating m6A demethylation of target transcripts such as MYC, CEBPA, ASB2 and RARA, leading to promote their expression. The chain is Alpha-ketoglutarate-dependent dioxygenase FTO (FTO) from Canis lupus familiaris (Dog).